The chain runs to 695 residues: FMR1-interacting protein NUFIP2 (695 aa).

The tract at residues 1–100 (MEEKPGQPQP…KTGYGELNGN (100 aa)) is disordered. Composition is skewed to basic residues over residues 11-23 (QHHH…HHHP) and 30-53 (PHHH…HHQQ). A Glycyl lysine isopeptide (Lys-Gly) (interchain with G-Cter in SUMO2) cross-link involves residue lysine 78. Threonine 87 carries the phosphothreonine modification. Residue lysine 109 forms a Glycyl lysine isopeptide (Lys-Gly) (interchain with G-Cter in SUMO2) linkage. Phosphoserine is present on residues serine 112 and serine 113. Residues lysine 136, lysine 146, lysine 157, and lysine 171 each participate in a glycyl lysine isopeptide (Lys-Gly) (interchain with G-Cter in SUMO2) cross-link. Disordered regions lie at residues 155–189 (IQKN…IPNG), 204–234 (GKGA…AKGC), 261–341 (FKPD…KPPP), and 369–402 (TIQN…SQVP). Residues 159 to 182 (SMDKKNGKSYENKSGENQSVDKSD) are compositionally biased toward basic and acidic residues. Serine 212 and serine 214 each carry phosphoserine. Position 218 is a phosphotyrosine (tyrosine 218). A phosphothreonine mark is found at threonine 219 and threonine 220. Residues 221–230 (PKKRKARRNS) show a composition bias toward basic residues. The span at 261 to 275 (FKPDYSEQKGNRVDG) shows a compositional bias: basic and acidic residues. Glycyl lysine isopeptide (Lys-Gly) (interchain with G-Cter in SUMO2) cross-links involve residues lysine 262 and lysine 281. Arginine 291 is modified (omega-N-methylarginine). Residue lysine 293 forms a Glycyl lysine isopeptide (Lys-Gly) (interchain with G-Cter in SUMO2) linkage. A Phosphoserine modification is found at serine 304. Lysine 307 is covalently cross-linked (Glycyl lysine isopeptide (Lys-Gly) (interchain with G-Cter in SUMO2)). Residues 373-396 (SSVSPTSSSSSSSSTGETQTQSSS) show a composition bias toward low complexity. Serine 376 bears the Phosphoserine mark. Residue threonine 571 is modified to Phosphothreonine. Serine 572, serine 592, serine 608, and serine 629 each carry phosphoserine. Residue threonine 633 is modified to Phosphothreonine. 4 positions are modified to phosphoserine: serine 637, serine 652, serine 655, and serine 692.

In terms of assembly, interacts with FMR1 (via N-terminus). Interacts with DDX6.

Its subcellular location is the nucleus. The protein localises to the cytoplasm. It is found in the stress granule. Functionally, binds RNA. This Homo sapiens (Human) protein is FMR1-interacting protein NUFIP2.